We begin with the raw amino-acid sequence, 78 residues long: Putative membrane protein insertion efficiency factor (78 aa).

Belongs to the UPF0161 family.

The protein resides in the cell membrane. Functionally, could be involved in insertion of integral membrane proteins into the membrane. The protein is Putative membrane protein insertion efficiency factor of Bacillus thuringiensis subsp. konkukian (strain 97-27).